A 261-amino-acid chain; its full sequence is CD40 ligand (261 aa).

Residues 1 to 22 lie on the Cytoplasmic side of the membrane; sequence MVETYHQPAPRSAATGLPVSMK. A helical; Signal-anchor for type II membrane protein membrane pass occupies residues 23-43; it reads IFMYLLTVFLITQMIGSALFA. Residues 44–261 lie on the Extracellular side of the membrane; the sequence is VYLHRRLDKI…GFTSFGLLKL (218 aa). In terms of domain architecture, THD spans 122-261; that stretch reads IAAHVISEAS…GFTSFGLLKL (140 aa). A disulfide bond links Cys178 and Cys218. An N-linked (GlcNAc...) asparagine glycan is attached at Asn240.

It belongs to the tumor necrosis factor family. Homotrimer. Interacts with CD28. CD40 ligand, soluble form: Exists as either a monomer or a homotrimer. Forms a ternary complex between CD40 and integrins for CD40-CD40LG signaling. In terms of processing, the soluble form derives from the membrane form by proteolytic processing.

Its subcellular location is the cell membrane. It localises to the cell surface. It is found in the secreted. In terms of biological role, cytokine that acts as a ligand to CD40/TNFRSF5. Costimulates T-cell proliferation and cytokine production. Its cross-linking on T-cells generates a costimulatory signal which enhances the production of IL4 and IL10 in conjunction with the TCR/CD3 ligation and CD28 costimulation. Induces the activation of NF-kappa-B. Induces the activation of kinases MAPK8 and PAK2 in T-cells. Mediates B-cell proliferation in the absence of co-stimulus as well as IgE production in the presence of IL4. Involved in immunoglobulin class switching. Functionally, acts as a ligand for integrins, specifically ITGA5:ITGB1 and ITGAV:ITGB3; both integrins and the CD40 receptor are required for activation of CD40-CD40LG signaling, which have cell-type dependent effects, such as B-cell activation, NF-kappa-B signaling and anti-apoptotic signaling. This is CD40 ligand (CD40LG) from Aotus trivirgatus (Three-striped night monkey).